Reading from the N-terminus, the 263-residue chain is MALASVLERPLPVNQRGFFGLGGRADLLDLGPGSLSDGLSLAAPGWGVPEEPGIEMLHGTTTLAFKFRHGVIVAADSRATAGAYIASQTVKKVIEINPYLLGTMAGGAADCSFWERLLARQCRIYELRNKERISVAAASKLLANMVYQYKGMGLSMGTMICGWDKRGPGLYYVDSEGNRISGATFSVGSGSVYAYGVMDRGYSYDLEVEQAYDLARRAIYQATYRDAYSGGAVNLYHVREDGWIRVSSDNVADLHEKYSGSTP.

Positions 1-59 are cleaved as a propeptide — removed in mature form; the sequence is MALASVLERPLPVNQRGFFGLGGRADLLDLGPGSLSDGLSLAAPGWGVPEEPGIEMLHG. Catalysis depends on Thr60, which acts as the Nucleophile. Residue Ala108 coordinates bortezomib.

The protein belongs to the peptidase T1B family. As to quaternary structure, the 26S proteasome consists of a 20S proteasome core and two 19S regulatory subunits. The 20S proteasome core is a barrel-shaped complex made of 28 subunits that are arranged in four stacked rings. The two outer rings are each formed by seven alpha subunits, and the two inner rings are formed by seven beta subunits. The proteolytic activity is exerted by three beta-subunits PSMB5, PSMB6 and PSMB7. Directly interacts with POMP. Interacts with ABCB1 and TAP1. In terms of assembly, (Microbial infection) Interacts with HIV-1 TAT protein.

The protein localises to the cytoplasm. Its subcellular location is the nucleus. It catalyses the reaction Cleavage of peptide bonds with very broad specificity.. Component of the 20S core proteasome complex involved in the proteolytic degradation of most intracellular proteins. This complex plays numerous essential roles within the cell by associating with different regulatory particles. Associated with two 19S regulatory particles, forms the 26S proteasome and thus participates in the ATP-dependent degradation of ubiquitinated proteins. The 26S proteasome plays a key role in the maintenance of protein homeostasis by removing misfolded or damaged proteins that could impair cellular functions, and by removing proteins whose functions are no longer required. Associated with the PA200 or PA28, the 20S proteasome mediates ubiquitin-independent protein degradation. This type of proteolysis is required in several pathways including spermatogenesis (20S-PA200 complex) or generation of a subset of MHC class I-presented antigenic peptides (20S-PA28 complex). Within the 20S core complex, PSMB5 displays a chymotrypsin-like activity. This Homo sapiens (Human) protein is Proteasome subunit beta type-5.